A 141-amino-acid chain; its full sequence is Large ribosomal subunit protein uL11 (141 aa).

The protein belongs to the universal ribosomal protein uL11 family. Part of the ribosomal stalk of the 50S ribosomal subunit. Interacts with L10 and the large rRNA to form the base of the stalk. L10 forms an elongated spine to which L12 dimers bind in a sequential fashion forming a multimeric L10(L12)X complex. One or more lysine residues are methylated.

Its function is as follows. Forms part of the ribosomal stalk which helps the ribosome interact with GTP-bound translation factors. This chain is Large ribosomal subunit protein uL11, found in Lactobacillus johnsonii (strain CNCM I-12250 / La1 / NCC 533).